Consider the following 217-residue polypeptide: Probable transaldolase (217 aa).

Lys-83 functions as the Schiff-base intermediate with substrate in the catalytic mechanism.

It belongs to the transaldolase family. Type 3B subfamily.

It is found in the cytoplasm. It carries out the reaction D-sedoheptulose 7-phosphate + D-glyceraldehyde 3-phosphate = D-erythrose 4-phosphate + beta-D-fructose 6-phosphate. It functions in the pathway carbohydrate degradation; pentose phosphate pathway; D-glyceraldehyde 3-phosphate and beta-D-fructose 6-phosphate from D-ribose 5-phosphate and D-xylulose 5-phosphate (non-oxidative stage): step 2/3. Its function is as follows. Transaldolase is important for the balance of metabolites in the pentose-phosphate pathway. This Ruegeria pomeroyi (strain ATCC 700808 / DSM 15171 / DSS-3) (Silicibacter pomeroyi) protein is Probable transaldolase.